The primary structure comprises 245 residues: Homeobox protein goosecoid (245 aa).

Positions 150 to 209 (KRRHRTIFTDEQLEALENLFQETKYPDVGTREQLARKVHLREEKVEVWFKNRRAKWRRQK) form a DNA-binding region, homeobox. The interval 203-245 (AKWRRQKRSSSEESENAQKWNKASKTSPEKRQEDGKSDLDSDS) is disordered. Residues 219–228 (AQKWNKASKT) are compositionally biased toward polar residues. Residues 229-245 (SPEKRQEDGKSDLDSDS) are compositionally biased toward basic and acidic residues.

It belongs to the paired homeobox family. Bicoid subfamily.

It localises to the nucleus. Functionally, involved in the development of the organizer region in the gastrula (Hensen node in chicken). This chain is Homeobox protein goosecoid (GSC), found in Gallus gallus (Chicken).